The primary structure comprises 153 residues: MTKKMNVESFNLDHTKVKAPYVRLVGVTEGANGDKVHKYDIRIKQPNKAHMEMPGLHSLEHLMAENIRNHSDAVLDIGPMGCQTGFYLSLINHDDYDDVLTMIEKTLEDVLQATEVPACNEVQCGWAANHSLLGAQEIAKEMLNEKASWSEVF.

Fe cation contacts are provided by His-57, His-61, and Cys-124.

This sequence belongs to the LuxS family. As to quaternary structure, homodimer. It depends on Fe cation as a cofactor.

The catalysed reaction is S-(5-deoxy-D-ribos-5-yl)-L-homocysteine = (S)-4,5-dihydroxypentane-2,3-dione + L-homocysteine. Functionally, involved in the synthesis of autoinducer 2 (AI-2) which is secreted by bacteria and is used to communicate both the cell density and the metabolic potential of the environment. The regulation of gene expression in response to changes in cell density is called quorum sensing. Catalyzes the transformation of S-ribosylhomocysteine (RHC) to homocysteine (HC) and 4,5-dihydroxy-2,3-pentadione (DPD). The protein is S-ribosylhomocysteine lyase of Oceanobacillus iheyensis (strain DSM 14371 / CIP 107618 / JCM 11309 / KCTC 3954 / HTE831).